A 386-amino-acid polypeptide reads, in one-letter code: Homoserine O-succinyltransferase (386 aa).

Residues 49-358 (NAILICHALS…DAEQGHDSFL (310 aa)) form the AB hydrolase-1 domain. S156 (nucleophile) is an active-site residue. R226 contacts substrate. Catalysis depends on residues D321 and H354. D355 provides a ligand contact to substrate.

This sequence belongs to the AB hydrolase superfamily. MetX family. Homodimer.

It is found in the cytoplasm. It carries out the reaction L-homoserine + succinyl-CoA = O-succinyl-L-homoserine + CoA. It participates in amino-acid biosynthesis; L-methionine biosynthesis via de novo pathway; O-succinyl-L-homoserine from L-homoserine: step 1/1. In terms of biological role, transfers a succinyl group from succinyl-CoA to L-homoserine, forming succinyl-L-homoserine. This Acinetobacter baumannii (strain ACICU) protein is Homoserine O-succinyltransferase.